A 513-amino-acid chain; its full sequence is Maturase K (513 aa).

It belongs to the intron maturase 2 family. MatK subfamily.

The protein resides in the plastid. It localises to the chloroplast. In terms of biological role, usually encoded in the trnK tRNA gene intron. Probably assists in splicing its own and other chloroplast group II introns. The polypeptide is Maturase K (Typha angustifolia (Narrow leaf cattail)).